Consider the following 84-residue polypeptide: Small ribosomal subunit protein uS17 (84 aa).

The protein belongs to the universal ribosomal protein uS17 family. In terms of assembly, part of the 30S ribosomal subunit.

One of the primary rRNA binding proteins, it binds specifically to the 5'-end of 16S ribosomal RNA. The polypeptide is Small ribosomal subunit protein uS17 (Thermoanaerobacter pseudethanolicus (strain ATCC 33223 / 39E) (Clostridium thermohydrosulfuricum)).